Consider the following 89-residue polypeptide: Rho beta-crystallin (89 aa).

Position 31 (His-31) interacts with substrate.

It belongs to the aldo/keto reductase family. In terms of assembly, monomer.

The protein is Rho beta-crystallin of Lepidodactylus lugubris (Mourning gecko).